We begin with the raw amino-acid sequence, 498 residues long: Osteoclast stimulatory transmembrane protein (498 aa).

Topologically, residues 1-51 (MRTIRAATEHLFGLGWKFWRLGICKAVVPLQAAWKAFSQPVPASCNELLTQ) are cytoplasmic. The chain crosses the membrane as a helical span at residues 52-72 (LLLCVSLASLIAGLAHHWLVS). Topologically, residues 73-81 (LQLYPLGPP) are extracellular. The helical transmembrane segment at 82 to 102 (ALVTSLCGLFVFLSLGLVPPI) threads the bilayer. Topologically, residues 103 to 121 (RCLFVLSVPTLGSKQGRRL) are cytoplasmic. Residues 122-142 (LLSYSAANLAVAVVPNVLGNV) form a helical membrane-spanning segment. Topologically, residues 143 to 226 (RAAGQVLSCV…LARAALGTQR (84 aa)) are extracellular. Residues 227 to 247 (VVTGLFLLGLLGESAWYLHRY) traverse the membrane as a helical segment. At 248 to 303 (LTDLRFDNIYATRQLVRQLAQAGATHLLTSPPPWLLQTAQPKLSREELLSCLLRLG) the chain is on the cytoplasmic side. The helical transmembrane segment at 304–324 (LLALLLVATAVTVASDYGAFL) threads the bilayer. Residues 325-401 (LAQAAVAWAQ…QAQPPRVTAA (77 aa)) lie on the Extracellular side of the membrane. Residues 402 to 422 (LAAGALQLLAGATLVLQAYAW) form a helical membrane-spanning segment. Residues 423 to 498 (RLRHTIAASF…DSLGPPYDLE (76 aa)) are Cytoplasmic-facing. The segment at 449 to 498 (QRRHNQSDHLNKQPGTMATRESRKPGQGTRTLESQGPQAHDSLGPPYDLE) is disordered. Residues 476-485 (GTRTLESQGP) are compositionally biased toward polar residues.

Expressed in osteoclast (at protein level). Ubiquitous. Highly expressed in multi-nuclear osteoclast cells compared to mono-nuclear macrophages. Expressed in foreign body giant cells (FBGCs).

It is found in the membrane. In terms of biological role, probable cell surface receptor that plays a role in cellular fusion and cell differentiation. Cooperates with DCSTAMP in modulating cell-cell fusion in both osteoclasts and foreign body giant cells (FBGCs). Involved in osteoclast bone resorption. Promotes osteoclast differentiation and may play a role in the multinucleated osteoclast maturation. The sequence is that of Osteoclast stimulatory transmembrane protein (Ocstamp) from Mus musculus (Mouse).